Reading from the N-terminus, the 157-residue chain is Protein Smg homolog (157 aa).

Belongs to the Smg family.

The chain is Protein Smg homolog from Colwellia psychrerythraea (strain 34H / ATCC BAA-681) (Vibrio psychroerythus).